Consider the following 122-residue polypeptide: Large ribosomal subunit protein uL14 (122 aa).

Belongs to the universal ribosomal protein uL14 family. As to quaternary structure, part of the 50S ribosomal subunit. Forms a cluster with proteins L3 and L19. In the 70S ribosome, L14 and L19 interact and together make contacts with the 16S rRNA in bridges B5 and B8.

In terms of biological role, binds to 23S rRNA. Forms part of two intersubunit bridges in the 70S ribosome. The polypeptide is Large ribosomal subunit protein uL14 (Streptococcus equi subsp. equi (strain 4047)).